The sequence spans 136 residues: Ubiquinol-cytochrome-c reductase complex assembly factor 2 (136 aa).

The N-terminal 13 residues, 1-13, are a transit peptide targeting the mitochondrion; sequence MAALRYRRFLKLC.

As to quaternary structure, interacts with UQCC1.

It localises to the mitochondrion matrix. Its subcellular location is the mitochondrion nucleoid. The protein resides in the mitochondrion. The protein localises to the mitochondrion intermembrane space. It is found in the mitochondrion inner membrane. Functionally, required for the assembly of the ubiquinol-cytochrome c reductase complex (mitochondrial respiratory chain complex III or cytochrome b-c1 complex). Plays a role in the modulation of respiratory chain activities such as oxygen consumption and ATP production and via its modulation of the respiratory chain activity can regulate skeletal muscle differentiation and insulin secretion by pancreatic beta-cells. Involved in cytochrome b translation and/or stability. The chain is Ubiquinol-cytochrome-c reductase complex assembly factor 2 (Uqcc2) from Rattus norvegicus (Rat).